We begin with the raw amino-acid sequence, 229 residues long: Adenylate kinase 1 (229 aa).

42–47 lines the ATP pocket; the sequence is GCGKGT. Phosphoserine is present on S62. AMP contacts are provided by residues S63, R68, 118-121, and Q125; that span reads GYPR. R156 contacts ATP. AMP-binding residues include R164 and R175.

Belongs to the adenylate kinase family. AK1 subfamily. As to expression, high expression levels in the thorax, suggesting a possible function in the gastrointestinal or reproductive systems.

The protein localises to the cytoplasm. The catalysed reaction is AMP + ATP = 2 ADP. Its function is as follows. Catalyzes the reversible transfer of the terminal phosphate group between ATP and AMP. Plays an important role in cellular energy homeostasis and in adenine nucleotide metabolism. The chain is Adenylate kinase 1 from Drosophila melanogaster (Fruit fly).